The following is a 66-amino-acid chain: UPF0434 protein Mnod_1613 (66 aa).

This sequence belongs to the UPF0434 family.

The chain is UPF0434 protein Mnod_1613 from Methylobacterium nodulans (strain LMG 21967 / CNCM I-2342 / ORS 2060).